Here is a 210-residue protein sequence, read N- to C-terminus: Redox-sensing transcriptional repressor Rex (210 aa).

The H-T-H motif DNA-binding region spans 17 to 56 (KYYRYLAELMDNDVDRISSKELSEKIGFTASQIRQDLNNF). 91 to 96 (GAGNIG) is a binding site for NAD(+).

It belongs to the transcriptional regulatory Rex family. In terms of assembly, homodimer.

It is found in the cytoplasm. Its function is as follows. Modulates transcription in response to changes in cellular NADH/NAD(+) redox state. The chain is Redox-sensing transcriptional repressor Rex from Clostridium novyi (strain NT).